The chain runs to 471 residues: MSLSRRSFLQASGVALAAGALPLKAEASGSQPALPVPPLLESRRGQPLFLTLQAAHWSFLGGAKAPVWGINGMYLGPTVKVHSGDDVKLIYSNRLAEPVSMTVSGLLEPGTLTGGAARLMQPGVDWSPVLPIRQAAATCWYHANTPNRMAPHVYNGLAGMWIVEDEVSKNLPLPNHYGVDDFPIIIQDKRLDGFGVPQYDTPASGGFFGDTMLVNGVQSPYVEVSRGWVRLRLLNASNARRYELSMTDNRAFHVVASDLGFLPAPMTVKRLSLGPGERREVLVDMSQGEEVSITAGEAAGVMDRLRGLFEPSSILVSTIVLTLKPTGLLPLVTDNLPMRLLADQILSGNVVRTRDLRLGDSEPGINGAMWDINRIDLTAQQGTWERWTVHADMPQTFHAEGVSFLVKSVNGAAPLVEDAGFKDTVWVDGDVELLVYFNQPSYEHFPFVYRSGALELADRGSAGNMLVQPSM.

A signal peptide (tat-type signal) is located at residues 1-27; that stretch reads MSLSRRSFLQASGVALAAGALPLKAEA. One can recognise a Plastocyanin-like domain in the interval 229–288; sequence VRLRLLNASNARRYELSMTDNRAFHVVASDLGFLPAPMTVKRLSLGPGERREVLVDMSQG.

This sequence belongs to the FtsP family. Post-translationally, predicted to be exported by the Tat system. The position of the signal peptide cleavage has not been experimentally proven.

Its subcellular location is the periplasm. Functionally, cell division protein that is required for growth during stress conditions. May be involved in protecting or stabilizing the divisomal assembly under conditions of stress. This Rahnella sp. (strain Y9602) protein is Cell division protein FtsP.